The following is a 283-amino-acid chain: Phosphatidylserine decarboxylase proenzyme (283 aa).

Active-site charge relay system; for autoendoproteolytic cleavage activity residues include aspartate 96, histidine 152, and serine 250. The active-site Schiff-base intermediate with substrate; via pyruvic acid; for decarboxylase activity is serine 250. Serine 250 carries the pyruvic acid (Ser); by autocatalysis modification.

The protein belongs to the phosphatidylserine decarboxylase family. PSD-B subfamily. Prokaryotic type I sub-subfamily. As to quaternary structure, heterodimer of a large membrane-associated beta subunit and a small pyruvoyl-containing alpha subunit. Pyruvate serves as cofactor. Is synthesized initially as an inactive proenzyme. Formation of the active enzyme involves a self-maturation process in which the active site pyruvoyl group is generated from an internal serine residue via an autocatalytic post-translational modification. Two non-identical subunits are generated from the proenzyme in this reaction, and the pyruvate is formed at the N-terminus of the alpha chain, which is derived from the carboxyl end of the proenzyme. The autoendoproteolytic cleavage occurs by a canonical serine protease mechanism, in which the side chain hydroxyl group of the serine supplies its oxygen atom to form the C-terminus of the beta chain, while the remainder of the serine residue undergoes an oxidative deamination to produce ammonia and the pyruvoyl prosthetic group on the alpha chain. During this reaction, the Ser that is part of the protease active site of the proenzyme becomes the pyruvoyl prosthetic group, which constitutes an essential element of the active site of the mature decarboxylase.

Its subcellular location is the cell membrane. It carries out the reaction a 1,2-diacyl-sn-glycero-3-phospho-L-serine + H(+) = a 1,2-diacyl-sn-glycero-3-phosphoethanolamine + CO2. The protein operates within phospholipid metabolism; phosphatidylethanolamine biosynthesis; phosphatidylethanolamine from CDP-diacylglycerol: step 2/2. Functionally, catalyzes the formation of phosphatidylethanolamine (PtdEtn) from phosphatidylserine (PtdSer). This is Phosphatidylserine decarboxylase proenzyme from Acinetobacter baumannii (strain ATCC 17978 / DSM 105126 / CIP 53.77 / LMG 1025 / NCDC KC755 / 5377).